A 447-amino-acid polypeptide reads, in one-letter code: N-succinylarginine dihydrolase (447 aa).

Residues 19–28 (AGLSFGNEAS), Asn110, and 137–138 (HR) each bind substrate. Glu174 is an active-site residue. Residue Arg212 participates in substrate binding. His248 is a catalytic residue. Substrate is bound by residues Asp250 and Asn359. The active-site Nucleophile is Cys365.

Belongs to the succinylarginine dihydrolase family. As to quaternary structure, homodimer.

It catalyses the reaction N(2)-succinyl-L-arginine + 2 H2O + 2 H(+) = N(2)-succinyl-L-ornithine + 2 NH4(+) + CO2. It functions in the pathway amino-acid degradation; L-arginine degradation via AST pathway; L-glutamate and succinate from L-arginine: step 2/5. In terms of biological role, catalyzes the hydrolysis of N(2)-succinylarginine into N(2)-succinylornithine, ammonia and CO(2). The sequence is that of N-succinylarginine dihydrolase from Salmonella enteritidis PT4 (strain P125109).